A 315-amino-acid polypeptide reads, in one-letter code: Protein sprouty homolog 2 (315 aa).

Positions 1-14 (MEARAQSGSGSQPL) are enriched in polar residues. Disordered stretches follow at residues 1–38 (MEAR…PQQV) and 51–140 (NTNE…GSSF). A compositionally biased stretch (basic and acidic residues) spans 20-32 (DSGRQRGEPDPRD). The span at 88–100 (PRQPSRPQHPPAH) shows a compositional bias: pro residues. Over residues 109 to 140 (RSISTVSSGSRSSTRTSTSSSSSEQRLLGSSF) the composition is skewed to low complexity. Residues 118–315 (SRSSTRTSTS…VPPRNFEKPT (198 aa)) are required for interaction with CAV1. Residues 177–291 (KCEDCGKCKC…CYDRVNRPGC (115 aa)) form the SPR domain. The required for interaction with TESK1 stretch occupies residues 178-315 (CEDCGKCKCK…VPPRNFEKPT (138 aa)).

It belongs to the sprouty family. Forms heterodimers with SPRY1. Forms a tripartite complex containing GAB1, METTL13 and SPRY2. Within the complex interacts with METTL13. Interacts with RAF1. Interacts (via C-terminus) with TESK1 (via C-terminus); the interaction disrupts SPRY2 interaction with GRB2, potentially via disruption of SPRY2 serine dephosphorylation. Interacts with PPP2R1A/PP2A-A and PPP2CA/PP2A-C; the interaction with PPP2CA/PP2A-C is inhibited by interaction with TESK1, possibly by vesicular sequestration of SPRY2. Inhibition of the interaction with the serine/threonine-protein phosphatase 2A (PP2A) holoenzyme results in loss of PP2A-mediated dephosphorylation, resulting in the loss of SPRY2 interaction with GRB2. Interacts with GRB2. Interacts with CBL/C-CBL; the interaction inhibits CBL-mediated ubiquitination of EGFR. Interacts (via C-terminus) with CAV1 (via C-terminus). In terms of processing, cleaved at Pro-144 by the prolyl endopeptidase FAP (seprase) activity (in vitro).

The protein localises to the cytoplasm. It localises to the cytoskeleton. The protein resides in the cell projection. Its subcellular location is the ruffle membrane. Functionally, antagonist of fibroblast growth factor (FGF) pathways via inhibition of FGF-mediated phosphorylation of ERK1/2. Thereby acts as an antagonist of FGF-induced retinal lens fiber differentiation, may inhibit limb bud outgrowth and may negatively modulate respiratory organogenesis. Inhibits TGFB-induced epithelial-to-mesenchymal transition in retinal lens epithelial cells. Inhibits CBL/C-CBL-mediated EGFR ubiquitination. This is Protein sprouty homolog 2 (SPRY2) from Bos taurus (Bovine).